Here is a 349-residue protein sequence, read N- to C-terminus: Terpene cyclase janA (349 aa).

An N-linked (GlcNAc...) asparagine glycan is attached at Asn80. A run of 6 helical transmembrane segments spans residues 81 to 101 (LSLY…VIVL), 116 to 136 (LAFL…IPAI), 155 to 175 (IGFY…LAAL), 189 to 209 (LIAV…IIHY), 223 to 243 (IACA…LWFA), and 308 to 328 (VILI…VALL).

The protein belongs to the membrane-bound ascI terpene cyclase family.

It localises to the membrane. Its pathway is secondary metabolite biosynthesis. In terms of biological role, part of the gene cluster that mediates the biosynthesis of the indole diterpenes janthitremanes such as shearinine K or shearinine A. The geranylgeranyl diphosphate (GGPP) synthase janG catalyzes the first step in janthitremane biosynthesis via conversion of farnesyl pyrophosphate and isopentyl pyrophosphate into geranylgeranyl pyrophosphate (GGPP). Condensation of indole-3-glycerol phosphate with GGPP by the prenyl transferase janC then forms 3-geranylgeranylindole (3-GGI). Epoxidation by the FAD-dependent monooxygenase janM leads to a epoxidized-GGI that is substrate of the terpene cyclase janB for cyclization to yield paspaline. Paspaline is subsequently converted to 13-desoxypaspaline by the cytochrome P450 monooxygenase janP, via beta-PC-M6 in a series of alpha-face oxidations. The cytochrome P450 monooxygenase janQ is proposed to carry out sequential beta-face oxidation steps at C-7 and C-13 of 13-desoxypaspaline to form paspalicine and paspalinine respectively. The indole diterpene prenyltransferase janD may then convert paspalinine into shearinine K which is substrate of janO and/or additional enzymes for oxidation and cyclization to generate shearinine A. The protein is Terpene cyclase janA of Penicillium janthinellum (Penicillium vitale).